We begin with the raw amino-acid sequence, 342 residues long: N-acetyl-gamma-glutamyl-phosphate reductase (342 aa).

Residue Cys147 is part of the active site.

This sequence belongs to the NAGSA dehydrogenase family. Type 1 subfamily.

The protein resides in the cytoplasm. It catalyses the reaction N-acetyl-L-glutamate 5-semialdehyde + phosphate + NADP(+) = N-acetyl-L-glutamyl 5-phosphate + NADPH + H(+). The protein operates within amino-acid biosynthesis; L-arginine biosynthesis; N(2)-acetyl-L-ornithine from L-glutamate: step 3/4. In terms of biological role, catalyzes the NADPH-dependent reduction of N-acetyl-5-glutamyl phosphate to yield N-acetyl-L-glutamate 5-semialdehyde. This Campylobacter jejuni subsp. jejuni serotype O:2 (strain ATCC 700819 / NCTC 11168) protein is N-acetyl-gamma-glutamyl-phosphate reductase.